The primary structure comprises 235 residues: tRNA (guanine-N(1)-)-methyltransferase (235 aa).

Residues Gly-114 and 134–139 (IGDYIL) each bind S-adenosyl-L-methionine.

Belongs to the RNA methyltransferase TrmD family. Homodimer.

The protein resides in the cytoplasm. It catalyses the reaction guanosine(37) in tRNA + S-adenosyl-L-methionine = N(1)-methylguanosine(37) in tRNA + S-adenosyl-L-homocysteine + H(+). Specifically methylates guanosine-37 in various tRNAs. This is tRNA (guanine-N(1)-)-methyltransferase from Ehrlichia ruminantium (strain Welgevonden).